Reading from the N-terminus, the 294-residue chain is Halotolerance protein HAL1 (294 aa).

Residues 115–153 (LKRGTKEQEDINSSTSKKSAVINNFSGEKTPNPRPQSSN) form a disordered region. Over residues 125-153 (INSSTSKKSAVINNFSGEKTPNPRPQSSN) the composition is skewed to polar residues. Ser-266 carries the phosphoserine modification.

The protein localises to the cytoplasm. Involved in salt tolerance. In Saccharomyces cerevisiae (strain ATCC 204508 / S288c) (Baker's yeast), this protein is Halotolerance protein HAL1 (HAL1).